The chain runs to 61 residues: U-poneritoxin(01)-Om5a (61 aa).

A signal peptide spans 1–23; the sequence is MKLSALSLAFAIILMMTIMYTKA. The propeptide occupies 24–41; it reads DADASADAEADADAEAEA. Position 59 is a glutamine amide (Gln-59).

This sequence belongs to the formicidae venom precursor-01 superfamily. In terms of processing, truncated sequences of this peptide have also been found in the venom. It is possible they have been cleaved in the venom. In terms of tissue distribution, expressed by the venom gland.

The protein resides in the secreted. Acidic peptide with potent hemolytic activities (94.8% at 50 uM). It also shows low antimicrobial activities against E.coli (MIC=50uM), as well as histamine-releasing activity (28.3% at 10 uM). Does not have activity against S.aureus, and S.cerevisiae. In Odontomachus monticola (Trap-jaw ant), this protein is U-poneritoxin(01)-Om5a.